A 411-amino-acid chain; its full sequence is Arginine deiminase (411 aa).

Cys-401 (amidino-cysteine intermediate) is an active-site residue.

It belongs to the arginine deiminase family.

The protein localises to the cytoplasm. It carries out the reaction L-arginine + H2O = L-citrulline + NH4(+). Its pathway is amino-acid degradation; L-arginine degradation via ADI pathway; carbamoyl phosphate from L-arginine: step 1/2. This is Arginine deiminase from Streptococcus pyogenes serotype M2 (strain MGAS10270).